A 91-amino-acid chain; its full sequence is Small ribosomal subunit protein uS19 (91 aa).

Belongs to the universal ribosomal protein uS19 family.

Its function is as follows. Protein S19 forms a complex with S13 that binds strongly to the 16S ribosomal RNA. This is Small ribosomal subunit protein uS19 from Prochlorococcus marinus (strain SARG / CCMP1375 / SS120).